The sequence spans 334 residues: MEERNKTLGEFIIENQKAFQYSSGELSRIINSIRLAAKVVNYKVNKAGLVDIIGAAGEQNIQGEDQQKLDVYANEVFIQTLINREIVCGIASEENDDFITVQGSDNCHNNKYVILMDPLDGSSNIDVNVSVGTIFSVFRRITPIGTPVTSEDFLQPGINQVAAGYVIYGTSTMLVYTTGFGVNGFTLNPAIGTFYLSHPNMKFPENGNIYSVNEGNYVHFPQGVKNYIKYCQREEEDRPYTSRYIGSLVADFHRNMIKGGIYIYPTSSKASKGKLRLLYECNPMAFIAEQAGGKATDGFGRIMEIQPTELHQRVPFFCGSKSMVEKAEEFMAAE.

Mg(2+) contacts are provided by Glu-93, Asp-117, Leu-119, and Asp-120. Residues 120-123 (DGSS), Asn-213, Tyr-244, and Lys-274 contribute to the substrate site. Glu-280 provides a ligand contact to Mg(2+).

The protein belongs to the FBPase class 1 family. As to quaternary structure, homotetramer. Requires Mg(2+) as cofactor.

Its subcellular location is the cytoplasm. The catalysed reaction is beta-D-fructose 1,6-bisphosphate + H2O = beta-D-fructose 6-phosphate + phosphate. The protein operates within carbohydrate biosynthesis; gluconeogenesis. The chain is Fructose-1,6-bisphosphatase class 1 from Flavobacterium johnsoniae (strain ATCC 17061 / DSM 2064 / JCM 8514 / BCRC 14874 / CCUG 350202 / NBRC 14942 / NCIMB 11054 / UW101) (Cytophaga johnsonae).